Here is a 394-residue protein sequence, read N- to C-terminus: Proliferation-associated protein 2G4 (394 aa).

Position 2 is an N-acetylserine (S2). A Phosphoserine modification is found at S2. A necessary for nucleolar localization region spans residues 2–48 (SGEDEQQEQTIAEDLVVTKYKMGGDIANRVLRSLVEASSSGVSVLSL). The segment at 46 to 54 (LSLCEKGDA) is RNA-binding. K298 participates in a covalent cross-link: Glycyl lysine isopeptide (Lys-Gly) (interchain with G-Cter in SUMO2). Residues 301 to 394 (LLQPFNVLYE…ETLEENGAGD (94 aa)) form a necessary for nucleolar localization region. S335 carries the post-translational modification Phosphoserine. Residues 358-394 (LQSSASRKTQKKKKKKASKTAENATSGETLEENGAGD) are disordered. Phosphoserine; by PKC/PRKCD is present on S361. Positions 361-375 (SASRKTQKKKKKKAS) are interaction with RNA. Residues 365–375 (KTQKKKKKKAS) show a composition bias toward basic residues. Phosphothreonine is present on residues T366 and T386.

Belongs to the peptidase M24 family. As to quaternary structure, isoform 2 interacts with the cytoplasmic domain of non-phosphorylated ERBB3; the interaction requires PKC activity. Interacts with AR. Treatment with HRG leads to dissociation from ERBB3 and increases association with AR. Interacts with nucleolin/NCL. Component of a ribonucleoprotein complex containing at least PA2G4, NCL, TOP1, PABPC2, RPLP0, acetylated histone H1 (HIST1H1A or H1F1), histone H1 2/4, RPL4, RPL8, RPL15, RPL18, RPL18A, RPL21, RPL11, RPL12, RPL28, RPL27, RPLP2 and RPL24. Interacts with HDAC2. Interacts with RB1; the interaction is enhanced upon PA2G4 dephosphorylation. Isoform 1 and isoform 2 interact with RNF20. Isoform 2 interacts with HUWE1. Interacts with AKT1. Interacts with DNAJC21. Phosphorylated on serine and threonine residues. Phosphorylation is enhanced by HRG treatment. Basal phosphorylation is PKC-dependent and HRG-induced phosphorylation is predominantly PKC-independent. Phosphorylation at Ser-361 by PKC/PRKCD regulates its nucleolar localization. Post-translationally, isoform 2 is polyubiquitinated, leading to proteasomal degradation and phosphorylation by PKC/PRKCD enhances polyubiquitination.

The protein localises to the cytoplasm. It is found in the nucleus. Its subcellular location is the nucleolus. In terms of biological role, may play a role in a ERBB3-regulated signal transduction pathway. Seems be involved in growth regulation. Acts a corepressor of the androgen receptor (AR) and is regulated by the ERBB3 ligand neuregulin-1/heregulin (HRG). Inhibits transcription of some E2F1-regulated promoters, probably by recruiting histone acetylase (HAT) activity. Binds RNA. Associates with 28S, 18S and 5.8S mature rRNAs, several rRNA precursors and probably U3 small nucleolar RNA. May be involved in regulation of intermediate and late steps of rRNA processing. May be involved in ribosome assembly. Mediates cap-independent translation of specific viral IRESs (internal ribosomal entry site). Together with PTBP1 is required for the translation initiation on the foot-and-mouth disease virus (FMDV) IRES. Regulates cell proliferation, differentiation, and survival. Isoform 1 suppresses apoptosis whereas isoform 2 promotes cell differentiation. This Rattus norvegicus (Rat) protein is Proliferation-associated protein 2G4 (Pa2g4).